Reading from the N-terminus, the 351-residue chain is uncharacterized protein (351 aa).

Positions 1-27 (MKNKKRVLIASSLSCAILLLSAATTQA) are cleaved as a signal peptide. The segment at 29–71 (SAHKDSQDQNKKEHVDKSQQKDKRNVTNKDKNSTVPDDIGKNG) is disordered. The segment covering 30 to 60 (AHKDSQDQNKKEHVDKSQQKDKRNVTNKDKN) has biased composition (basic and acidic residues).

It belongs to the aerolysin family.

This is an uncharacterized protein from Staphylococcus aureus (strain Mu50 / ATCC 700699).